The following is a 229-amino-acid chain: Large ribosomal subunit protein bL19cy (229 aa).

The N-terminal 70 residues, 1 to 70, are a transit peptide targeting the chloroplast; the sequence is MATSSHLLPQ…DSKKRKEFIA (70 aa).

This sequence belongs to the bacterial ribosomal protein bL19 family. In terms of assembly, part of the 50S ribosomal subunit.

The protein localises to the plastid. Its subcellular location is the chloroplast. In terms of biological role, located at the 30S-50S ribosomal subunit interface and binds directly to 23S ribosomal RNA. This chain is Large ribosomal subunit protein bL19cy, found in Arabidopsis thaliana (Mouse-ear cress).